A 324-amino-acid polypeptide reads, in one-letter code: NADH-ubiquinone oxidoreductase chain 1 (324 aa).

A run of 8 helical transmembrane segments spans residues 9–29 (LINP…LTLI), 75–95 (FLFL…WAPM), 106–126 (LGIL…LGSG), 146–166 (ISYE…SGGY), 177–197 (SIWL…STLA), 228–248 (LFFL…AVLF), 259–279 (ELTT…FLWV), and 299–319 (FLPL…ALAG).

This sequence belongs to the complex I subunit 1 family.

The protein localises to the mitochondrion inner membrane. It catalyses the reaction a ubiquinone + NADH + 5 H(+)(in) = a ubiquinol + NAD(+) + 4 H(+)(out). In terms of biological role, core subunit of the mitochondrial membrane respiratory chain NADH dehydrogenase (Complex I) that is believed to belong to the minimal assembly required for catalysis. Complex I functions in the transfer of electrons from NADH to the respiratory chain. The immediate electron acceptor for the enzyme is believed to be ubiquinone. In Carassius auratus (Goldfish), this protein is NADH-ubiquinone oxidoreductase chain 1 (MT-ND1).